Reading from the N-terminus, the 877-residue chain is DNA mismatch repair protein MutS (877 aa).

G630–S637 is an ATP binding site.

This sequence belongs to the DNA mismatch repair MutS family.

Its function is as follows. This protein is involved in the repair of mismatches in DNA. It is possible that it carries out the mismatch recognition step. This protein has a weak ATPase activity. The chain is DNA mismatch repair protein MutS from Jannaschia sp. (strain CCS1).